We begin with the raw amino-acid sequence, 144 residues long: MVSKASRDQLRKYGAVSLASLLVAASIVAYRWWNAAPSIEVEKKLRRSVSRCVVVTQGIQNEDMIHDLLFEDTVMLLAPGCTAEGRLKSASRENAYKVISCTTWQSVWACVRHFRKHTLLVRTSEVPSGVPADIGGYVSDISDI.

A helical transmembrane segment spans residues 13 to 35; sequence YGAVSLASLLVAASIVAYRWWNA.

Belongs to the peroxin-22 family.

Its subcellular location is the peroxisome membrane. Its function is as follows. Involved in peroxisome biogenesis. The sequence is that of Peroxisome assembly protein 22 (PEX22) from Eremothecium gossypii (strain ATCC 10895 / CBS 109.51 / FGSC 9923 / NRRL Y-1056) (Yeast).